Consider the following 189-residue polypeptide: SAGA-associated factor 11 homolog (189 aa).

An SGF11-type zinc finger spans residues 94 to 115 (CTCPNCDRLVAATRFAPHLEKC). Residues 128–189 (RRLATKEGSS…GSKKNNGKTF (62 aa)) form a disordered region. Over residues 136 to 145 (SSASSTSTST) the composition is skewed to low complexity. At S165 the chain carries Phosphoserine. Residues 175–189 (NSRNNGSKKNNGKTF) show a composition bias toward low complexity.

It belongs to the SGF11 family. As to quaternary structure, component of some SAGA transcription coactivator-HAT complexes, at least composed of Ada2b, not/nonstop, Pcaf/Gcn5, Sgf11 and Spt3. Within the SAGA complex, Sgf11, e(y)2, and not/nonstop form an additional subcomplex of SAGA called the DUB module (deubiquitination module). Interacts directly with not/nonstop. Interacts with the AMEX complex component xmas-2. Interacts with Cbp80; important for promoter recruitment of Sgf11 that is not associated with the DUB module.

It is found in the nucleus. The protein localises to the nucleoplasm. The protein resides in the cytoplasm. Component of the transcription regulatory histone acetylation (HAT) complex SAGA, a multiprotein complex that activates transcription by remodeling chromatin and mediating histone acetylation and deubiquitination. Within the SAGA complex, participates in a subcomplex that specifically deubiquitinates histone H2B. The SAGA complex is recruited to specific gene promoters by activators, where it is required for transcription. Required for nuclear receptor-mediated transactivation. Binds independently on SAGA to promoters in an RNA-dependent manner. Binds to mRNA and is essential for total mRNA export from the nucleus. Required to counteract heterochromatin silencing. Controls the development of neuronal connectivity in visual system by being required for accurate axon targeting in the optic lobe. Required for expression of ecdysone-induced genes such as br/broad. This is SAGA-associated factor 11 homolog from Drosophila virilis (Fruit fly).